The sequence spans 504 residues: GTPase Obg (504 aa).

Residues 2–159 (SQFVDRVVLH…KDVTLELKSM (158 aa)) form the Obg domain. The tract at residues 68 to 88 (AERGNNGAGDDRHGARGKDLT) is disordered. The OBG-type G domain maps to 160-340 (ADVGLVGFPS…LRFALMDIVR (181 aa)). GTP is bound by residues 166 to 173 (GFPSAGKS), 191 to 195 (FTTLA), 212 to 215 (DVPG), 292 to 295 (NKMD), and 321 to 323 (STV). Mg(2+) is bound by residues S173 and T193. In terms of domain architecture, OCT spans 364 to 444 (KRKGRFADFE…IGGITFEWDP (81 aa)). The disordered stretch occupies residues 449 to 481 (GVDQTPAYGRGKDRRLEQTDRVTAEQRKRASQA). Residues 458–476 (RGKDRRLEQTDRVTAEQRK) are compositionally biased toward basic and acidic residues.

It belongs to the TRAFAC class OBG-HflX-like GTPase superfamily. OBG GTPase family. In terms of assembly, monomer. The cofactor is Mg(2+).

Its subcellular location is the cytoplasm. Its function is as follows. An essential GTPase which binds GTP, GDP and possibly (p)ppGpp with moderate affinity, with high nucleotide exchange rates and a fairly low GTP hydrolysis rate. Plays a role in control of the cell cycle, stress response, ribosome biogenesis and in those bacteria that undergo differentiation, in morphogenesis control. The chain is GTPase Obg from Corynebacterium urealyticum (strain ATCC 43042 / DSM 7109).